Reading from the N-terminus, the 264-residue chain is Probable DNA polymerase sliding clamp 2 (264 aa).

The DNA-binding element occupies 75 to 94; that stretch reads SIAQEATVGIKISNFVRILD.

Belongs to the PCNA family.

Sliding clamp subunit. Responsible for tethering the catalytic subunit of DNA polymerase to DNA during high-speed replication. This chain is Probable DNA polymerase sliding clamp 2, found in Paramecium bursaria Chlorella virus 1 (PBCV-1).